The following is a 391-amino-acid chain: Mannose-6-phosphate isomerase (391 aa).

The Zn(2+) site is built by glutamine 97, histidine 99, glutamate 134, and histidine 255. Arginine 274 is a catalytic residue. Lysine 280 bears the N6-acetyllysine mark.

This sequence belongs to the mannose-6-phosphate isomerase type 1 family. It depends on Zn(2+) as a cofactor.

It is found in the cytoplasm. The catalysed reaction is D-mannose 6-phosphate = D-fructose 6-phosphate. Its function is as follows. Involved in the conversion of glucose to GDP-L-fucose, which can be converted to L-fucose, a capsular polysaccharide. In Shigella flexneri, this protein is Mannose-6-phosphate isomerase (manA).